A 168-amino-acid chain; its full sequence is Photosystem I assembly protein Ycf3 (168 aa).

3 TPR repeats span residues 35–68 (AFTY…EIDP), 72–105 (SYIL…NPFL), and 120–153 (GEQA…TPGN).

It belongs to the Ycf3 family.

The protein localises to the plastid. It localises to the chloroplast thylakoid membrane. In terms of biological role, essential for the assembly of the photosystem I (PSI) complex. May act as a chaperone-like factor to guide the assembly of the PSI subunits. This Nicotiana sylvestris (Wood tobacco) protein is Photosystem I assembly protein Ycf3.